The chain runs to 317 residues: MTQGKLSVANKAPGTEGQQHQANGEKKDAPAVPSAPPSYEEATSGEGLKAGTFPQGPTAVPLHPSWAYVDPSGSSGYEGGFPAGHHEHFTTFSWDDQKVRRLFIRKVYTILLVQLLVTLAVVALFTFCDVVKDYVQANPGWYWASYAVFFATYLTLACCSGPRRHFPWNLILLTIFTLSMAYLTGMLSSYYNTTSVLLCLVITALVCLSVTIFSFQTKFDFTSCQGVLFVLLMTLFFSGLLLAVLLPFQYVPWLHAVYAVLGAGVFTLFLAFDTQLLMGNRRHSLSPEEYIFGALNIYLDIIYIFTFFLQLFGTNRE.

The disordered stretch occupies residues 1-54 (MTQGKLSVANKAPGTEGQQHQANGEKKDAPAVPSAPPSYEEATSGEGLKAGTFP). Transmembrane regions (helical) follow at residues 107–127 (VYTI…LFTF), 139–159 (PGWY…LACC), and 166–186 (FPWN…LTGM). An N-linked (GlcNAc...) asparagine glycan is attached at asparagine 192. 4 consecutive transmembrane segments (helical) span residues 195-215 (SVLL…IFSF), 226-246 (GVLF…AVLL), 252-272 (PWLH…FLAF), and 291-311 (IFGA…FLQL).

It belongs to the BI1 family. LFG subfamily. In terms of assembly, interacts with FAS/TNFRSF6 and BAX. In terms of tissue distribution, brain. Highly expressed in cerebellum, also found in cortex, olfactory bulb, and hippocampus.

The protein localises to the cell membrane. It is found in the membrane raft. Its subcellular location is the postsynaptic cell membrane. Its function is as follows. Antiapoptotic protein which protects cells uniquely from Fas-induced apoptosis. Regulates Fas-mediated apoptosis in neurons by interfering with caspase-8 activation. Plays a role in cerebellar development by affecting cerebellar size, internal granular layer (IGL) thickness, and Purkinje cell (PC) development. This is Protein lifeguard 2 (Faim2) from Mus musculus (Mouse).